The chain runs to 552 residues: Putative transport protein NT01EI_3867 (552 aa).

5 helical membrane passes run 4–24 (IALT…IGNW), 26–46 (IYGV…VGHF), 65–85 (FGLI…FFSS), 90–112 (GLRL…AAIH), and 158–178 (MGYA…IWLI). 2 RCK C-terminal domains span residues 191 to 276 (RDFD…VIGE) and 279 to 361 (DTSL…IVGN). 6 helical membrane-spanning segments follow: residues 371-391 (MLPV…PLFI), 403-425 (AGGP…LYWF), 439-459 (IVLF…DTLL), 464-484 (VTWI…AALL), 493-513 (YLTL…LAFA), and 530-550 (VYPL…LLFW).

Belongs to the AAE transporter (TC 2.A.81) family. YidE subfamily.

Its subcellular location is the cell membrane. The polypeptide is Putative transport protein NT01EI_3867 (Edwardsiella ictaluri (strain 93-146)).